Consider the following 143-residue polypeptide: Small ribosomal subunit protein uS11c (143 aa).

It belongs to the universal ribosomal protein uS11 family. Part of the 30S ribosomal subunit.

The protein localises to the plastid. It localises to the chloroplast. This chain is Small ribosomal subunit protein uS11c, found in Saccharum officinarum (Sugarcane).